Here is a 724-residue protein sequence, read N- to C-terminus: Coiled-coil domain-containing protein 175 (724 aa).

Coiled-coil stretches lie at residues 131–164 (VEMSELHTKITRINDEIEFLKKKILHLQTDNTAL), 203–256 (INLE…RKET), 282–373 (VVLS…RQYK), 426–534 (ELHR…ERKL), and 565–627 (QLQV…QLRE).

The polypeptide is Coiled-coil domain-containing protein 175 (CCDC175) (Bos taurus (Bovine)).